A 482-amino-acid chain; its full sequence is Iroquois-class homeodomain protein irx-5 (482 aa).

The homeobox DNA-binding region spans 109 to 171; sequence DPAYRKNATR…NARRRLKKEN (63 aa). Disordered regions lie at residues 173–307 and 462–482; these read MTWT…HQSH and QSQA…MSSI. Positions 182–198 are enriched in acidic residues; it reads EDEEDDENIDLEKNEED. The span at 199-256 shows a compositional bias: basic and acidic residues; that stretch reads DPRKLEEKGDQDGDAGDQKRSPSAVDFDRLEGEVRQGKELDQTRSDSEQNEVEERNDL. A compositionally biased stretch (pro residues) spans 264–273; that stretch reads PTSPLCPPDQ. The segment covering 284–305 has biased composition (basic residues); that stretch reads HRHTVHNHHHQSIQQLHHHSHQ. Positions 467-482 are enriched in basic and acidic residues; the sequence is LNKDTPYEMKKGMSSI.

This sequence belongs to the TALE/IRO homeobox family. In terms of tissue distribution, expressed in the neural plate in overlapping patterns with other irx members, which all share an anterior border of expression. Broadly expressed in the tailbud rhombencephalon (hindbrain). Outside the nervous system and at tailbud stages, expressed in the developing otic vesicle and branchial arches.

It localises to the nucleus. In terms of biological role, acts partially redundantly with other irx members in neural patterning. Required for formation of the posterior forebrain, midbrain, hindbrain, and to a lesser extent, spinal cord. Patterns the neuroectoderm in both the anterior/posterior and dorsal/ventral axes. Does not appear to play a role in pronephros kidney development. Involved in craniofacial and gonadal development. Modulates the migration of progenitor cell populations in branchial arches and gonads by repressing CXCL12. The polypeptide is Iroquois-class homeodomain protein irx-5 (Xenopus tropicalis (Western clawed frog)).